Reading from the N-terminus, the 207-residue chain is Varv peptide A/Kalata-B1 (207 aa).

A signal peptide spans 1-20 (MKMFIVLVLSAAFALPAAFA). Residues 21–66 (TEQDVITLQAYEELLKNGAANGMTKTVISSPVLEEALVSYSKNKLG) constitute a propeptide that is removed on maturation. Residues 67-95 (GLPVCGETCVGGTCNTPGCSCSWPVCTRN) constitute a cross-link (cyclopeptide (Gly-Asn)). 3 cysteine pairs are disulfide-bonded: C71/C85, C75/C87, and C80/C92. A propeptide spanning residues 96 to 120 (SLESTKSANPLLEEALTAFAKKGLG) is cleaved from the precursor. Positions 121–149 (GLPVCGETCVGGTCNTPGCTCSWPVCTRN) form a cross-link, cyclopeptide (Gly-Asn). 3 cysteine pairs are disulfide-bonded: C125–C139, C129–C141, and C134–C146. The propeptide occupies 150–174 (ALETQKPNHLLEEALVAFAKKGNLG). Positions 175–203 (GLPVCGETCVGGTCNTPGCSCSWPVCTRN) form a cross-link, cyclopeptide (Gly-Asn). Intrachain disulfides connect C179–C193, C183–C195, and C188–C200. Residues 204–207 (ALAM) constitute a propeptide that is removed on maturation.

The protein belongs to the cyclotide family. Moebius subfamily. Post-translationally, varv peptide A and kalata-B1 are cyclic peptides.

Probably participates in a plant defense mechanism. Has hemolytic activity. The sequence is that of Varv peptide A/Kalata-B1 from Viola odorata (Sweet violet).